The sequence spans 414 residues: Particulate methane monooxygenase alpha subunit (414 aa).

The signal sequence occupies residues 1 to 32 (MKTIKDRIAKWSAIGLLSAVAATAFYAPSASA). The Cu cation site is built by His33, His48, His72, His137, and His139. Residues 33-172 (HGEKSQAAFM…MSEFRNPVTT (140 aa)) form a cupredoxin domain used to construct soluble pmoB (spmoB) region. 2 consecutive transmembrane segments (helical) span residues 186–206 (GNTY…IGYW) and 235–255 (VAMG…SSAN). The tract at residues 265–414 (QAGTMRGMKP…IDAPLIPSFM (150 aa)) is cupredoxin domain used to construct soluble pmoB (spmoB).

In terms of assembly, m.capsulatus has two forms of methane monooxygenase, a soluble (sMMO) and a membrane-bound (particulate) type (pMMO). The particulate type is a nonamer composed of three alpha:beta:gamma heterotrimeric protomers assembled into a cylindrical structure; the beta and gamma subunits comprise the bulk of the membrane-spanning regions and the soluble regions are derived primarily from alpha subunits which form two antiparallel beta-barrel-like structures each. This assembly, also called pMMO hydroxylase (pMMO-H), is proposed to associate with methanol dehydrogenase (MDH), also designated as pMMO-R, to form the pMMO-C complex which seems to have greater methane monooxygenase activity. It depends on Cu(2+) as a cofactor.

Its subcellular location is the membrane. It carries out the reaction methane + a quinol + O2 = methanol + a quinone + H2O. Its function is as follows. Methane monooxygenase is responsible for the initial oxygenation of methane to methanol in methanotrophs. At least in vitro, specific quinols can replace NADH as reductants. In Methylococcus capsulatus (strain ATCC 33009 / NCIMB 11132 / Bath), this protein is Particulate methane monooxygenase alpha subunit (pmoB1).